Consider the following 139-residue polypeptide: Nucleoside diphosphate kinase (139 aa).

Residues K11, F59, R87, T93, R104, and N114 each coordinate ATP. The active-site Pros-phosphohistidine intermediate is H117.

It belongs to the NDK family. Homotetramer. Requires Mg(2+) as cofactor.

The protein resides in the cytoplasm. It carries out the reaction a 2'-deoxyribonucleoside 5'-diphosphate + ATP = a 2'-deoxyribonucleoside 5'-triphosphate + ADP. It catalyses the reaction a ribonucleoside 5'-diphosphate + ATP = a ribonucleoside 5'-triphosphate + ADP. Its function is as follows. Major role in the synthesis of nucleoside triphosphates other than ATP. The ATP gamma phosphate is transferred to the NDP beta phosphate via a ping-pong mechanism, using a phosphorylated active-site intermediate. The polypeptide is Nucleoside diphosphate kinase (Pasteurella multocida (strain Pm70)).